Here is a 444-residue protein sequence, read N- to C-terminus: Chromosome partition protein MukF (444 aa).

The leucine-zipper stretch occupies residues leucine 212–isoleucine 240.

Belongs to the MukF family. Interacts, and probably forms a ternary complex, with MukE and MukB via its C-terminal region. The complex formation is stimulated by calcium or magnesium. It is required for an interaction between MukE and MukB.

It is found in the cytoplasm. The protein resides in the nucleoid. Involved in chromosome condensation, segregation and cell cycle progression. May participate in facilitating chromosome segregation by condensation DNA from both sides of a centrally located replisome during cell division. Not required for mini-F plasmid partitioning. Probably acts via its interaction with MukB and MukE. Overexpression results in anucleate cells. It has a calcium binding activity. The chain is Chromosome partition protein MukF from Haemophilus influenzae (strain PittGG).